The primary structure comprises 70 residues: Putative membrane protein insertion efficiency factor (70 aa).

The protein belongs to the UPF0161 family.

The protein resides in the cell membrane. Its function is as follows. Could be involved in insertion of integral membrane proteins into the membrane. The chain is Putative membrane protein insertion efficiency factor from Lachnoclostridium phytofermentans (strain ATCC 700394 / DSM 18823 / ISDg) (Clostridium phytofermentans).